Consider the following 473-residue polypeptide: Photosystem II CP43 reaction center protein (473 aa).

A propeptide spanning residues 1 to 14 is cleaved from the precursor; that stretch reads MKTLYSLRRFYPVE. N-acetylthreonine is present on threonine 15. At threonine 15 the chain carries Phosphothreonine. Helical transmembrane passes span 69–93, 134–155, 178–200, 255–275, and 291–312; these read LFEV…PHLA, LLGP…KDRN, KALY…RKIT, KPFA…LSYS, and WFNN…ASQA. [CaMn4O5] cluster is bound at residue glutamate 367. The helical transmembrane segment at 447-471 threads the bilayer; it reads RARAAAAGFEKGIDRDFEPVLSMTP.

The protein belongs to the PsbB/PsbC family. PsbC subfamily. PSII is composed of 1 copy each of membrane proteins PsbA, PsbB, PsbC, PsbD, PsbE, PsbF, PsbH, PsbI, PsbJ, PsbK, PsbL, PsbM, PsbT, PsbX, PsbY, PsbZ, Psb30/Ycf12, at least 3 peripheral proteins of the oxygen-evolving complex and a large number of cofactors. It forms dimeric complexes. The cofactor is Binds multiple chlorophylls and provides some of the ligands for the Ca-4Mn-5O cluster of the oxygen-evolving complex. It may also provide a ligand for a Cl- that is required for oxygen evolution. PSII binds additional chlorophylls, carotenoids and specific lipids..

It is found in the plastid. It localises to the chloroplast thylakoid membrane. Functionally, one of the components of the core complex of photosystem II (PSII). It binds chlorophyll and helps catalyze the primary light-induced photochemical processes of PSII. PSII is a light-driven water:plastoquinone oxidoreductase, using light energy to abstract electrons from H(2)O, generating O(2) and a proton gradient subsequently used for ATP formation. The polypeptide is Photosystem II CP43 reaction center protein (Populus trichocarpa (Western balsam poplar)).